Reading from the N-terminus, the 554-residue chain is MTTSTPDIQPAVQHTAQVAIVGAGPVGLMMANYLGQMGISVLVVEKLATLIDYPRAIGIDDESLRAMQAVGLVNDVLPHTTPWHAMRFLTPKGRCFADIQPMTDEFGWSRRNAFIQPQVDAVMYHGLQRFPQVRCLFSREVGAFSQTGDSVTLNLKGPDGERETVRADWLVACDGGASFIRRTLNIPFEGKTAPNQWIVIDIANDPLATPHVYLCCDPVRPYVSAALPHGVRRFEFMVMPGETEAQLSEPHNMRRLLSKVLPDPDRVELIRQRVYTHNARLAERFRINRVLLAGDAAHIMPVWQGQGYNSGMRDAFNLAWKLALVVNGKAGEALLDSYQQERRDHAKAMIDLSVTAGHVLAPPKRWQGAVRDGLSWLLNYLPPVKRYFLEMRFKPMPQYREGALLTDGAGKTSPVGKMFIQPQVTLESGESVLLDEVIGANFAIIGWGCNPQWGLNAGQIARWRAIGVRFIQVVPEVQIHREQDNAPGTLRVGDTQNRLKSWFALHNTAIAVVRPDRFVAALAIPQTLGAQLTALAEKMTLATGDTAHAEEKVA.

FAD is bound by residues 17–46 (QVAIVGAGPVGLMMANYLGQMGISVLVVEK) and 285–295 (FRINRVLLAGD).

This sequence belongs to the PheA/TfdB FAD monooxygenase family. FAD serves as cofactor.

The enzyme catalyses 3-(3-hydroxyphenyl)propanoate + NADH + O2 + H(+) = 3-(2,3-dihydroxyphenyl)propanoate + NAD(+) + H2O. It catalyses the reaction (2E)-3-(3-hydroxyphenyl)prop-2-enoate + NADH + O2 + H(+) = (2E)-3-(2,3-dihydroxyphenyl)prop-2-enoate + NAD(+) + H2O. It functions in the pathway aromatic compound metabolism; 3-phenylpropanoate degradation. Catalyzes the insertion of one atom of molecular oxygen into position 2 of the phenyl ring of 3-(3-hydroxyphenyl)propionate (3-HPP) and hydroxycinnamic acid (3HCI). In Klebsiella pneumoniae subsp. pneumoniae (strain ATCC 700721 / MGH 78578), this protein is 3-(3-hydroxy-phenyl)propionate/3-hydroxycinnamic acid hydroxylase.